The sequence spans 869 residues: Sodium-dependent phosphate transporter (869 aa).

At 1–18 the chain is on the extracellular side; the sequence is MEAVAELSAPSLAGAPGE. A helical transmembrane segment spans residues 19-39; it reads YTWIVAVAGVTCFLTAFAIGA. At 40 to 54 the chain is on the cytoplasmic side; it reads NDVANTFSSSVGSRA. A helical transmembrane segment spans residues 55-75; it reads IPLWAAIGMSAVLETVGATLL. The Extracellular portion of the chain corresponds to 76-97; the sequence is GGAVTDSIRSKIIDFEVFRETP. A helical membrane pass occupies residues 98–118; it reads SILMTGMLCALVGAGLWLFLA. The Cytoplasmic portion of the chain corresponds to 119-120; the sequence is NH. The chain crosses the membrane as a helical span at residues 121–141; sequence LGLPVSTTHSIIGALLGFGLA. Over 142–154 the chain is Extracellular; it reads SGNVRAVKWTQVA. The chain crosses the membrane as a helical span at residues 155-175; that stretch reads FIVGSWVAAPLAASAAGATIF. Over 176–196 the chain is Cytoplasmic; the sequence is VCMRRLILRSRQPLRRAKRFL. Residues 197 to 217 form a helical membrane-spanning segment; the sequence is WIFIYLITLTFSVFLVFKNFF. The Extracellular portion of the chain corresponds to 218-250; the sequence is ELNVSCDQMVAGGRVEHFEPCRISRWADAHSGT. A helical membrane pass occupies residues 251 to 271; the sequence is ALGIAVALSVALTFVISCLVY. The Cytoplasmic portion of the chain corresponds to 272–720; it reads RFAFYRVESY…SGSADSEIGS (449 aa). Disordered regions lie at residues 286 to 312, 374 to 401, and 453 to 571; these read KRSSRTEPRDASEEGTGPSHARPGGLL, AAAAKPDVGTAAQSPESRFAADPVGSSV, and SAFL…KRER. Residues 457-481 are compositionally biased toward low complexity; that stretch reads SSPSSSVPPSSPSPSSTPSSPSASP. Over residues 482–491 the composition is skewed to pro residues; the sequence is RRPPSRPPVP. The span at 492 to 509 shows a compositional bias: low complexity; it reads RTCSPAPVSPSVPRAFAS. The span at 556 to 571 shows a compositional bias: basic and acidic residues; it reads PHPERRDEVPAAKRER. Residues 721–741 traverse the membrane as a helical segment; the sequence is PWYILLFGGLSMSLGLALLGY. Over 742 to 759 the chain is Extracellular; it reads RVIKTVGVKLVKITPARG. Residues 760 to 780 form a helical membrane-spanning segment; the sequence is FSMELGAAWTVLIFSAIGIPL. Topologically, residues 781–837 are cytoplasmic; that stretch reads STTHCAVGSTVGVGLMEPKHPRRETGDGPVAEGEEPKKRAVQCPVINTASVNWKLFG. A helical membrane pass occupies residues 838 to 858; it reads GVFVSWIITIAFSALVTAALF. At 859 to 869 the chain is on the extracellular side; that stretch reads SFAAYSPRMVS.

Belongs to the inorganic phosphate transporter (PiT) (TC 2.A.20) family.

It is found in the cell membrane. It localises to the vacuole membrane. Its subcellular location is the cytoplasmic vesicle membrane. It carries out the reaction 2 Na(+)(out) + phosphate(out) = 2 Na(+)(in) + phosphate(in). In terms of biological role, sodium-phosphate symporter which preferentially transports the monovalent form of phosphate with a stoichiometry of two sodium ions per phosphate ion. Plays a role in stabilizing the cytosolic pH and osmoregulation. May be required for optimal virulence of parasites in vivo. This is Sodium-dependent phosphate transporter from Toxoplasma gondii (strain ATCC 50861 / VEG).